The chain runs to 562 residues: Alpha-amylase 2 (562 aa).

Position 236 (asparagine 236) interacts with Ca(2+). Aspartate 309 functions as the Nucleophile in the catalytic mechanism. Glutamate 338 acts as the Proton donor in catalysis.

Belongs to the glycosyl hydrolase 13 family. As to quaternary structure, monomer. The cofactor is Ca(2+).

Its subcellular location is the cytoplasm. The enzyme catalyses Endohydrolysis of (1-&gt;4)-alpha-D-glucosidic linkages in polysaccharides containing three or more (1-&gt;4)-alpha-linked D-glucose units.. The chain is Alpha-amylase 2 (amyB) from Dictyoglomus thermophilum (strain ATCC 35947 / DSM 3960 / H-6-12).